Reading from the N-terminus, the 555-residue chain is Glutamine--tRNA ligase (555 aa).

A 'HIGH' region motif is present at residues 34–44 (PEPNGYLHIGH). Residues 35–37 (EPN) and 41–47 (HIGHAKS) contribute to the ATP site. Residues Asp67 and Tyr212 each contribute to the L-glutamine site. Residues Thr231, 261-262 (RL), and 269-271 (MSK) each bind ATP. Residues 268-272 (VMSKR) carry the 'KMSKS' region motif.

Belongs to the class-I aminoacyl-tRNA synthetase family. In terms of assembly, monomer.

The protein localises to the cytoplasm. The catalysed reaction is tRNA(Gln) + L-glutamine + ATP = L-glutaminyl-tRNA(Gln) + AMP + diphosphate. This Cronobacter sakazakii (strain ATCC BAA-894) (Enterobacter sakazakii) protein is Glutamine--tRNA ligase.